A 1395-amino-acid chain; its full sequence is Adventurous-gliding motility protein Z (1395 aa).

In terms of domain architecture, Response regulatory spans 4–122 (RVLIVESEHD…ELAALSHGIV (119 aa)). Residue Asp48 is modified to 4-aspartylphosphate. 6 disordered regions span residues 137–172 (LNGT…AMTE), 874–893 (AAES…GLRS), 919–947 (EQHA…ARAH), 1212–1249 (AAES…AAKQ), 1287–1312 (RYKS…EDDE), and 1326–1395 (AAAA…ELDK). The stretch at 213-911 (EGKIQILRDE…LEQTHGQLAA (699 aa)) forms a coiled coil. Basic and acidic residues-rich tracts occupy residues 919 to 928 (EQHAHQESRK) and 1228 to 1249 (QKER…AAKQ). 2 stretches are compositionally biased toward low complexity: residues 1291–1306 (KSAT…AKPA) and 1326–1352 (AAAA…KKAP). Residues 1382–1395 (EDDDWTALVDELDK) are compositionally biased toward acidic residues.

Interacts with MglA.

Its subcellular location is the cytoplasm. Required for adventurous-gliding motility (A motility), in response to environmental signals sensed by the frz chemosensory system. Forms ordered clusters that span the cell length and that remain stationary relative to the surface across which the cells move, serving as anchor points (focal, transient adhesion sites) that allow the bacterium to move forward. Clusters disassemble at the lagging cell pole. The chain is Adventurous-gliding motility protein Z (aglZ) from Myxococcus xanthus (strain DK1622).